Reading from the N-terminus, the 358-residue chain is DnaJ homolog subfamily C member 18 (358 aa).

The 65-residue stretch at 82-146 folds into the J domain; the sequence is NYYEILGVSR…DKRLRYDEYG (65 aa). The chain crosses the membrane as a helical span at residues 228 to 248; the sequence is AFIQLLPVLVIVIISVITQLL.

Its subcellular location is the endoplasmic reticulum membrane. (Microbial infection) In case of infection by polyomavirus, involved in the virus endoplasmic reticulum membrane penetration and infection. Regulates the recruitment of DNAJB12:DNAJB14 into SV40-induced foci and all cooperate to guide SV40 across the endoplasmic reticulum membrane. The foci represent the site from which SV40 penetrates into the cytosol. This Homo sapiens (Human) protein is DnaJ homolog subfamily C member 18.